A 378-amino-acid polypeptide reads, in one-letter code: Gibberellin 20 oxidase 2 (378 aa).

The segment covering Met-1–Pro-10 has biased composition (polar residues). A disordered region spans residues Met-1–Thr-26. The span at Ala-11–Gln-25 shows a compositional bias: basic and acidic residues. Residues Glu-220 to Pro-320 form the Fe2OG dioxygenase domain. Fe cation-binding residues include His-245, Asp-247, and His-301. The active site involves Arg-311.

Belongs to the iron/ascorbate-dependent oxidoreductase family. GA20OX subfamily. Requires Fe(2+) as cofactor. L-ascorbate is required as a cofactor. As to expression, expressed in inflorescence and developing siliques. Detected in seeds, roots, cotyledons and leaves. In seeds, specifically detected at the rim of the embryo and the outer integument.

The catalysed reaction is gibberellin A12 + 2 2-oxoglutarate + 3 O2 + H(+) = gibberellin A9 + 2 succinate + 3 CO2 + 2 H2O. It catalyses the reaction gibberellin A12 + 2-oxoglutarate + O2 = gibberellin A15 + succinate + CO2. The enzyme catalyses gibberellin A15 + 2-oxoglutarate + O2 = gibberellin A24 + succinate + CO2 + H2O. It carries out the reaction gibberellin A53 + 2-oxoglutarate + O2 = gibberellin A44 + succinate + CO2. The catalysed reaction is gibberellin A12 + 3 2-oxoglutarate + 3 O2 = gibberellin A25 + 3 succinate + 3 CO2 + H2O + H(+). It participates in plant hormone biosynthesis; gibberellin biosynthesis. Key oxidase enzyme in the biosynthesis of gibberellin that catalyzes the conversion of GA12 to GA9, via a three-step oxidation at C-20 of the GA skeleton, and GA25 is also formed as a minor product. GA53 is less effectively oxidized than GA12 and is only oxidized one step to GA44. Involved in the promotion of the floral transition, fertility and silique elongation, but plays only a minor role in elongation of seedling organs. Acts redundantly with GA20OX1. The chain is Gibberellin 20 oxidase 2 (GA20OX2) from Arabidopsis thaliana (Mouse-ear cress).